Reading from the N-terminus, the 705-residue chain is Structure-specific endonuclease subunit SLX1 homolog (705 aa).

Residues 4–90 (RFHCVYLLTS…TASARLRHAI (87 aa)) form the GIY-YIG domain. 2 disordered regions span residues 155–192 (RASS…DSKG) and 290–323 (ASFA…RVHT). Composition is skewed to polar residues over residues 160 to 175 (RVGT…SLQG) and 310 to 320 (STGSRTPSPQR). The SLX1-type zinc-finger motif lies at 446–526 (CSLCTLPLQP…PSQPCPCPLC (81 aa)). Residues 595–604 (KGAGEAPGAA) show a composition bias toward low complexity. The interval 595–628 (KGAGEAPGAASTVRASTMHVGPARRDAPRVSSPS) is disordered.

It belongs to the SLX1 family. In terms of assembly, forms a heterodimer with a member of the SLX4 family. A divalent metal cation serves as cofactor.

The protein resides in the nucleus. Its function is as follows. Catalytic subunit of a heterodimeric structure-specific endonuclease that resolves DNA secondary structures generated during DNA repair and recombination. Has endonuclease activity towards branched DNA substrates, introducing single-strand cuts in duplex DNA close to junctions with ss-DNA. The sequence is that of Structure-specific endonuclease subunit SLX1 homolog from Leishmania infantum.